A 100-amino-acid polypeptide reads, in one-letter code: Putative pterin-4-alpha-carbinolamine dehydratase (100 aa).

This sequence belongs to the pterin-4-alpha-carbinolamine dehydratase family.

The catalysed reaction is (4aS,6R)-4a-hydroxy-L-erythro-5,6,7,8-tetrahydrobiopterin = (6R)-L-erythro-6,7-dihydrobiopterin + H2O. In Alteromonas mediterranea (strain DSM 17117 / CIP 110805 / LMG 28347 / Deep ecotype), this protein is Putative pterin-4-alpha-carbinolamine dehydratase.